The primary structure comprises 509 residues: Circadian clock oscillator protein KaiC (509 aa).

KaiC domains are found at residues 1-243 (MKDK…IIVF) and 257-509 (IRIS…IEKN). ATP is bound by residues Gly-45, Thr-46, Gly-47, Lys-48, Thr-49, Ser-85, Lys-220, Leu-221, Arg-222, Thr-224, His-226, Asp-237, Thr-286, Gly-287, Thr-288, Gly-289, Lys-290, and Thr-291. A Mg(2+)-binding site is contributed by Thr-49. Residues Thr-291 and Glu-314 each contribute to the Mg(2+) site. An ATP-binding site is contributed by Trp-327. Ser-427 carries the phosphoserine; by autocatalysis modification. Thr-428 bears the Phosphothreonine; by autocatalysis mark. Positions 447, 453, 454, 455, 457, 459, and 461 each coordinate ATP.

This sequence belongs to the KaiC family. In terms of assembly, homohexamer; hexamerization is dependent on ATP-binding. Component of the KaiBC complex. KaiC interacts with SasA, activating its autokinase function and leading to RpaA activation. It depends on Mg(2+) as a cofactor. Phosphorylated on serine and threonine residues by autocatalysis. Has a 4 step phosphorylation cycle; the autokinase acts first on Thr-428, then Ser-427. When Ser-427 is modified KaiC switches to an autophosphatase mode, acting first on phospho-Thr-428 then phospho-Ser-427.

The catalysed reaction is L-seryl-[protein] + ATP = O-phospho-L-seryl-[protein] + ADP + H(+). It catalyses the reaction L-threonyl-[protein] + ATP = O-phospho-L-threonyl-[protein] + ADP + H(+). It carries out the reaction ATP + H2O = ADP + phosphate + H(+). In terms of biological role, central component of the KaiBC oscillator complex, which constitutes the main circadian regulator in cyanobacteria. Its composition changes during the circadian cycle to control KaiC phosphorylation. Autophosphorylates and has a weak ATPase activity; ATPase activity defines the circadian period. This is Circadian clock oscillator protein KaiC from Prochlorococcus marinus subsp. pastoris (strain CCMP1986 / NIES-2087 / MED4).